Consider the following 278-residue polypeptide: MASIDGLPPLREVIRAHGLSAKKQLGQNFLLDLNLTAKIARLAGDLTNSDVLEVGPGPGGLTRGLLAEGARRVLAIEKDARCLPALAEVAAAWPGRLEVLNADALEVDVAARLTPPIRIVANLPYNVGTELLTRWLSSDWPPFWESLTLMFQKEVAERIVAKPGSKAYGRLALLSQWRTDPKIVLTLPPDAFTPPPSIHSAVVHFTRLEAPRHPADPKVLARVTAMAFNQRRKMLRSSLKGLVPDIETVLREAGIEPTQRAEEIPLEGFCALARRLAG.

S-adenosyl-L-methionine-binding residues include Asn28, Leu30, Gly55, Glu77, Asp103, and Asn122.

Belongs to the class I-like SAM-binding methyltransferase superfamily. rRNA adenine N(6)-methyltransferase family. RsmA subfamily.

It localises to the cytoplasm. It carries out the reaction adenosine(1518)/adenosine(1519) in 16S rRNA + 4 S-adenosyl-L-methionine = N(6)-dimethyladenosine(1518)/N(6)-dimethyladenosine(1519) in 16S rRNA + 4 S-adenosyl-L-homocysteine + 4 H(+). Specifically dimethylates two adjacent adenosines (A1518 and A1519) in the loop of a conserved hairpin near the 3'-end of 16S rRNA in the 30S particle. May play a critical role in biogenesis of 30S subunits. The chain is Ribosomal RNA small subunit methyltransferase A from Cereibacter sphaeroides (strain ATCC 17023 / DSM 158 / JCM 6121 / CCUG 31486 / LMG 2827 / NBRC 12203 / NCIMB 8253 / ATH 2.4.1.) (Rhodobacter sphaeroides).